The following is a 111-amino-acid chain: Secreted RxLR effector protein 159 (111 aa).

A signal peptide spans 1 to 21 (MRGAYYVAIAFLVAASSRTAA). The RxLR-dEER signature appears at 50-71 (RVLRGSRDLKDKLAVYANDEQR). Asn-81 carries an N-linked (GlcNAc...) asparagine glycan.

The protein belongs to the RxLR effector family.

It is found in the secreted. Its subcellular location is the host nucleus. The protein resides in the host cytoplasm. Its function is as follows. Secreted effector that completely suppresses the host cell death induced by cell death-inducing proteins. The protein is Secreted RxLR effector protein 159 of Plasmopara viticola (Downy mildew of grapevine).